Here is a 401-residue protein sequence, read N- to C-terminus: Large ribosomal subunit protein uL4 (401 aa).

The protein belongs to the universal ribosomal protein uL4 family.

In Drosophila melanogaster (Fruit fly), this protein is Large ribosomal subunit protein uL4 (RpL4).